We begin with the raw amino-acid sequence, 855 residues long: Homeobox-leucine zipper protein HOX33 (855 aa).

Positions 1–21 (MAAAAVGGRGERLSSSSPTAA) are disordered. Residues 26 to 89 (DAGKYVRYTP…NRRCREKQRK (64 aa)) constitute a DNA-binding region (homeobox). The stretch at 84–126 (REKQRKEASRLQTVNRKLNAMNKLLMEENDRLQKQVSRLVYEN) forms a coiled coil. The START domain occupies 168 to 390 (DANNPAGLLA…LRHIRQIAHE (223 aa)).

This sequence belongs to the HD-ZIP homeobox family. Class III subfamily. Expressed in seedlings, roots, stems, leaf sheaths and blades and panicles.

Its subcellular location is the nucleus. In terms of biological role, probable transcription factor. In Oryza sativa subsp. indica (Rice), this protein is Homeobox-leucine zipper protein HOX33 (HOX33).